The following is a 440-amino-acid chain: Argininosuccinate lyase (440 aa).

This sequence belongs to the lyase 1 family. Argininosuccinate lyase subfamily.

Its subcellular location is the cytoplasm. It catalyses the reaction 2-(N(omega)-L-arginino)succinate = fumarate + L-arginine. It participates in amino-acid biosynthesis; L-arginine biosynthesis; L-arginine from L-ornithine and carbamoyl phosphate: step 3/3. The protein is Argininosuccinate lyase of Clostridium botulinum (strain ATCC 19397 / Type A).